A 616-amino-acid polypeptide reads, in one-letter code: Zinc metalloproteinase-disintegrin-like protein H3 (616 aa).

Positions 1-20 (MIQVLLVIICLAVFPYQGSS) are cleaved as a signal peptide. The propeptide occupies 21–193 (IILESGNVND…KKASQLNLTP (173 aa)). Glu194 bears the Pyrrolidone carboxylic acid (Glu) mark. The 197-residue stretch at 203–399 (KYIKLVIVAD…KMPQCILNKP (197 aa)) folds into the Peptidase M12B domain. 3 cysteine pairs are disulfide-bonded: Cys314–Cys394, Cys354–Cys378, and Cys356–Cys361. A Zn(2+)-binding site is contributed by His339. The short motif at 339-350 (HEMGHNLGMDHD) is the Metal-binding element. Residue Glu340 is the Proton acceptor of the active site. Zn(2+) is bound by residues His343 and His349. Asn377 carries N-linked (GlcNAc...) asparagine glycosylation. Residues 407–493 (PAVCGNYLVE…ECPTDQFQRN (87 aa)) form the Disintegrin domain. Residues Val409, Asn412, Glu416, Glu419, and Asp422 each contribute to the Ca(2+) site. Disulfide bonds link Cys410/Cys439, Cys421/Cys434, Cys423/Cys429, Cys433/Cys456, Cys447/Cys453, Cys452/Cys478, Cys465/Cys485, Cys472/Cys504, Cys497/Cys509, Cys516/Cys566, Cys531/Cys577, Cys544/Cys554, Cys561/Cys603, and Cys597/Cys609. Residues 471-473 (ECD) carry the D/ECD-tripeptide motif. Residues Asp473, Asp476, and Asp488 each coordinate Ca(2+). A glycan (N-linked (GlcNAc...) asparagine) is linked at Asn506.

It belongs to the venom metalloproteinase (M12B) family. P-III subfamily. P-IIIc sub-subfamily. In terms of assembly, homodimer; disulfide-linked. Requires Zn(2+) as cofactor. N-glycosylated. In terms of processing, the N-terminus is blocked. In terms of tissue distribution, expressed by the venom gland (at protein level). Expressed by the venom gland.

It localises to the secreted. Its activity is regulated as follows. The proteolytic activity requires Zn(2+) and Ca(2+) ions. The alpha-fibrinogenase activity is completely inhibited by EDTA, but not by PMSF. Functionally, zinc metalloprotease that has fibrinogenolytic and hemorrhagic activities. Cleaves insulin B chain readily at '38-Ala-|-Leu-39' bond, and at a significantly slower rate, at '40-Tyr-|-Leu-41' bond. Hydrolyzes isolated extracellular matrix (ECM) bovine fibronectin, and basal membrane (BM) proteins human collagen IV and, to a lesser extent, murine laminin, in vitro. Cleaves murine nidogen (at '350-Ser-|-Phe-351' and '380-Tyr-|-Asn-381' bonds), but not laminin, in a solubilized BM preparation. Hydrolyzes plasma proteins involved in blood coagulation in vitro. It significantly prolongs thrombin time. Has potent alpha-fibrinogenase activity cleaving human fibrinogen alpha chain at '432-Lys-|-Leu-433' bond, but does not cleave beta or gamma chains. Hydrolyzes bovine prothrombin, but does not cleave it at '366-Arg-|-Ile-367' bond, which is necessary for the formation of active alpha-thrombin, however, the cleavage of fragment 1 from it leads to reduced alpha-thrombin formation. Hydrolyzes bovine factor X heavy chain at '211-Ser-|-Leu-212', '213-Asp-|-Leu-214' and '216-Gly-|-Leu-217' bonds activating it only marginally as does not cleave at the physiological activation site. Does not cleave factor X light chain. No hydrolysis or activation of plasminogen. The alpha-fibrinogenase activity likely contributes to its hemorrhagic activity, which in rat can be completely neutralized in vivo by anti-ammodytagin antibodies, which strongly cross-react with this protein. Has very weak collagen-, ADP- and ristocetin-induced platelet aggregation inhibition activity in vitro. In Vipera ammodytes ammodytes (Western sand viper), this protein is Zinc metalloproteinase-disintegrin-like protein H3.